We begin with the raw amino-acid sequence, 135 residues long: MRLTIVSVGHKMPDWVATATIEIKEIKPDLTLAKEAVKIAAAIPKGSRVIALDERGKDQTTQNLATQLASWRQEGFDITFLIGGADGLDPSLKTTAQAIWRLSSLTLPHAMARVLLVEQLYRAWTILQGHPYHRE.

S-adenosyl-L-methionine is bound by residues Leu52, Gly83, and 102–107; that span reads LSSLTL.

It belongs to the RNA methyltransferase RlmH family. Homodimer.

It localises to the cytoplasm. The catalysed reaction is pseudouridine(1915) in 23S rRNA + S-adenosyl-L-methionine = N(3)-methylpseudouridine(1915) in 23S rRNA + S-adenosyl-L-homocysteine + H(+). Specifically methylates the pseudouridine at position 1915 (m3Psi1915) in 23S rRNA. The polypeptide is Ribosomal RNA large subunit methyltransferase H (Polynucleobacter necessarius subsp. necessarius (strain STIR1)).